Here is a 364-residue protein sequence, read N- to C-terminus: tRNA/tmRNA (uracil-C(5))-methyltransferase (364 aa).

Residues glutamine 188, tyrosine 216, asparagine 221, glutamate 237, and aspartate 297 each contribute to the S-adenosyl-L-methionine site. The active-site Nucleophile is the cysteine 322. Glutamate 356 (proton acceptor) is an active-site residue.

Belongs to the class I-like SAM-binding methyltransferase superfamily. RNA M5U methyltransferase family. TrmA subfamily.

It carries out the reaction uridine(54) in tRNA + S-adenosyl-L-methionine = 5-methyluridine(54) in tRNA + S-adenosyl-L-homocysteine + H(+). It catalyses the reaction uridine(341) in tmRNA + S-adenosyl-L-methionine = 5-methyluridine(341) in tmRNA + S-adenosyl-L-homocysteine + H(+). Dual-specificity methyltransferase that catalyzes the formation of 5-methyluridine at position 54 (m5U54) in all tRNAs, and that of position 341 (m5U341) in tmRNA (transfer-mRNA). In Teredinibacter turnerae (strain ATCC 39867 / T7901), this protein is tRNA/tmRNA (uracil-C(5))-methyltransferase.